The primary structure comprises 180 residues: Signal peptidase complex subunit 3 (180 aa).

The Cytoplasmic segment spans residues 1–12; it reads MHNLLSRANSLL. Residues 13–33 form a helical; Signal-anchor for type II membrane protein membrane-spanning segment; the sequence is AFTLWVMAAVTAACFLSTVFL. Residues 34–180 lie on the Lumenal side of the membrane; the sequence is DYTVSNHLEV…PTTYTTTRRS (147 aa). N-linked (GlcNAc...) asparagine glycosylation is present at Asn-141.

Belongs to the SPCS3 family. Component of the signal peptidase complex (SPC) composed of a catalytic subunit sec-11 and three accessory subunits spcs-1, spcs-2 and spcs-3. The complex induces a local thinning of the ER membrane which is used to measure the length of the signal peptide (SP) h-region of protein substrates. This ensures the selectivity of the complex towards h-regions shorter than 18-20 amino acids.

It is found in the endoplasmic reticulum membrane. In terms of biological role, essential component of the signal peptidase complex (SPC) which catalyzes the cleavage of N-terminal signal sequences from nascent proteins as they are translocated into the lumen of the endoplasmic reticulum. Essential for the SPC catalytic activity, possibly by stabilizing and positioning the active center of the complex close to the lumenal surface. In Caenorhabditis briggsae, this protein is Signal peptidase complex subunit 3.